The chain runs to 287 residues: Survival motor neuron protein (287 aa).

Positions 1–28 are disordered; the sequence is MGGGGGGFPEPEDSVLFRRGTGESDDSD. Residues 9–40 form a P1 (binding site for GEMIN2) region; it reads PEPEDSVLFRRGTGESDDSDVWDDTALIKAYD. Residue threonine 21 is modified to Phosphothreonine. Serine 24 and serine 27 each carry phosphoserine. Residue lysine 47 forms a Glycyl lysine isopeptide (Lys-Gly) (interchain with G-Cter in SUMO2) linkage. Disordered regions lie at residues 51-86 and 149-221; these read KNGDISEASEKPKGTPKRKSAKNKSQRKNTTSPSKQ and NAQE…PPPH. Basic residues predominate over residues 64 to 77; that stretch reads GTPKRKSAKNKSQR. The residue at position 65 (threonine 65) is a Phosphothreonine. Position 80 is a phosphothreonine; by PKA (threonine 80). The Tudor domain maps to 86-146; it reads QWKVGDNCCA…LSPTSEVANI (61 aa). The required for interaction with RPP20/POP7 stretch occupies residues 92–204; that stretch reads NCCAIWSEDG…MPRSGLGPGK (113 aa). The segment covering 149 to 160 has biased composition (low complexity); the sequence is NAQENENESQIS. The segment covering 167–179 has biased composition (polar residues); sequence SSRSPLNKPNNIR. Lysine 204 participates in a covalent cross-link: Glycyl lysine isopeptide (Lys-Gly) (interchain with G-Cter in SUMO2). Pro residues predominate over residues 211–221; that stretch reads GPPPPPPPPPH. Positions 234 to 261 are P2 (binding site for SM B); it reads PPMIPPPPPICPDSLDDADALGSMLISW. A required for interaction with SYNCRIP region spans residues 273–287; sequence GFKQSQKEGRYSHFN.

Belongs to the SMN family. In terms of assembly, homooligomer; may form higher order homooligomers in the dimer to octamer range. Part of the core SMN complex that contains SMN1, GEMIN2/SIP1, DDX20/GEMIN3, GEMIN4, GEMIN5, GEMIN6, GEMIN7, GEMIN8 and STRAP/UNRIP. Part of the SMN-Sm complex that contains SMN1, GEMIN2/SIP1, DDX20/GEMIN3, GEMIN4, GEMIN5, GEMIN6, GEMIN7, GEMIN8, STRAP/UNRIP and the Sm proteins SNRPB, SNRPD1, SNRPD2, SNRPD3, SNRPE, SNRPF and SNRPG. Component of an import snRNP complex composed of KPNB1, RNUT1, SMN1 and ZNF259. Interacts with DDX20, FBL, NOLA1, RNUT1, SYNCRIP and with several spliceosomal snRNP core Sm proteins, including SNRPB, SNRPD1, SNRPD2, SNRPD3, SNRPE and ILF3. Interacts with GEMIN2; the interaction is direct. Interacts with GEMIN3; the interaction is direct. Interacts with GEMIN8; the interaction is direct. Interacts with SNRPB; the interaction is direct. Interacts (via Tudor domain) with SNRPD1 (via C-terminus); the interaction is direct. Interacts with SNRPD2; the interaction is direct. Interacts (via Tudor domain) with SNRPD3 (via C-terminus); the interaction is direct. Interacts with SNRPE; the interaction is direct. Interacts with OSTF1, LSM10, LSM11 and RPP20/POP7. Interacts (via C-terminal region) with ZPR1 (via C-terminal region). Interacts (via Tudor domain) with COIL. Interacts with SETX; recruits SETX to POLR2A. Interacts with POLR2A (via the C-terminal domain (CTD)). Interacts with PRMT5. Interacts with XRN2. Interacts (via C-terminus) with FMR1 (via C-terminus); the interaction is direct and occurs in a RNA-independent manner. Interacts (via Tudor domain) with SF3B2 ('Arg-508'-methylated form). Interacts with WRAP53/TCAB1. Interacts (via Tudor domain) with ELAVL4 in an RNA-independent manner; the interaction is required for localization of ELAVL4 to RNA granules. Interacts with FRG1.

Its subcellular location is the nucleus. The protein localises to the gem. The protein resides in the cajal body. It localises to the cytoplasm. It is found in the cytoplasmic granule. Its subcellular location is the perikaryon. The protein localises to the cell projection. The protein resides in the neuron projection. It localises to the axon. It is found in the myofibril. Its subcellular location is the sarcomere. The protein localises to the z line. In terms of biological role, the SMN complex catalyzes the assembly of small nuclear ribonucleoproteins (snRNPs), the building blocks of the spliceosome, and thereby plays an important role in the splicing of cellular pre-mRNAs. Most spliceosomal snRNPs contain a common set of Sm proteins SNRPB, SNRPD1, SNRPD2, SNRPD3, SNRPE, SNRPF and SNRPG that assemble in a heptameric protein ring on the Sm site of the small nuclear RNA to form the core snRNP (Sm core). In the cytosol, the Sm proteins SNRPD1, SNRPD2, SNRPE, SNRPF and SNRPG are trapped in an inactive 6S pICln-Sm complex by the chaperone CLNS1A that controls the assembly of the core snRNP. To assemble core snRNPs, the SMN complex accepts the trapped 5Sm proteins from CLNS1A forming an intermediate. Binding of snRNA inside 5Sm ultimately triggers eviction of the SMN complex, thereby allowing binding of SNRPD3 and SNRPB to complete assembly of the core snRNP. Within the SMN complex, SMN1 acts as a structural backbone and together with GEMIN2 it gathers the Sm complex subunits. Ensures the correct splicing of U12 intron-containing genes that may be important for normal motor and proprioceptive neurons development. Also required for resolving RNA-DNA hybrids created by RNA polymerase II, that form R-loop in transcription terminal regions, an important step in proper transcription termination. May also play a role in the metabolism of small nucleolar ribonucleoprotein (snoRNPs). In Bos taurus (Bovine), this protein is Survival motor neuron protein (SMN1).